A 220-amino-acid chain; its full sequence is GILT-like protein CBG03282 (220 aa).

Positions 1–22 (MTIIRTLFVYYSFLFILVLCSS) are cleaved as a signal peptide. An N-linked (GlcNAc...) asparagine glycan is attached at Asn131.

This sequence belongs to the GILT family.

The protein localises to the secreted. The sequence is that of GILT-like protein CBG03282 from Caenorhabditis briggsae.